The following is a 372-amino-acid chain: MIPGSTSGISFSRILSRQASHQDATQHTDAQQAEIQQAAEDSSPGAEVQKFVQSTDEMSAALAQFRNRRDYEKKSSNLSNSFERVLEDEALPKAKQILKLISVHGGALEDFLRQARSLFPDPSDLVLVLRELLRRKDLEEIVRKKLESLLKHVEEQTDPKTLKAGINCALKARLFGKTLSLKPGLLRASYRQFIQSESHEVEIYSDWIASYGYQRRLVVLDFIEGSLLTDIDANDASCSRLEFGQLLRRLTQLKMLRSADLLFVSTLLSYSFTKAFNAEESSWLLLMLSLLQQPHEVDSLLADIIGLNALLLSHKEHASFLQIFYQVCKAIPSSLFYEEYWQEELLMALRSMTDIAYKHEMAEQRRTIEKLS.

A compositionally biased stretch (polar residues) spans 1 to 19 (MIPGSTSGISFSRILSRQA). The tract at residues 1-47 (MIPGSTSGISFSRILSRQASHQDATQHTDAQQAEIQQAAEDSSPGAE) is disordered. Positions 21-40 (HQDATQHTDAQQAEIQQAAE) are enriched in low complexity.

It localises to the cell membrane. In terms of biological role, involved in the triggering of intracellular events that lead to microbial internalization. These events include increase in calcium level, redistribution of actin microfilaments, and changes in the normal structure of the microvilli. Encoded within the type III secretion system (SPI-1 T3SS), it is essential for the translocation of protein effectors into host cells. Forms a complex with SipB and SipC in the presence of their chaperone SicA. This Salmonella typhi protein is Invasion protein InvE (invE).